Here is a 325-residue protein sequence, read N- to C-terminus: Natural cytotoxicity triggering receptor 1 (325 aa).

The first 16 residues, 1 to 16, serve as a signal peptide directing secretion; that stretch reads MLPTLTALLCLGLCLS. The Extracellular segment spans residues 17 to 258; the sequence is QRINTEKQTL…WDHTAQNLIR (242 aa). Ig-like domains are found at residues 42–100 and 137–192; these read GNSV…TCFY and GENV…RCFG. C49 and C98 are disulfide-bonded. A glycan (N-linked (GlcNAc...) asparagine) is linked at N139. C144 and C190 are disulfide-bonded. N-linked (GlcNAc...) asparagine glycosylation occurs at N216. The helical transmembrane segment at 259 to 279 threads the bilayer; it reads IGLACIIVMALVWLLAEDWLS. Residues 280 to 325 are Cytoplasmic-facing; sequence RRKDHEKLNRLTSWECRGRRRMHRYHEEEQRDAISMRELKATPGDM.

Belongs to the natural cytotoxicity receptor (NCR) family. Interacts with CD3Z and FCER1G. As to expression, weakly expressed in spleen, heart and lung.

The protein localises to the cell membrane. In terms of biological role, cytotoxicity-activating receptor that may contribute to the increased efficiency of activated natural killer (NK) cells to mediate tumor cell lysis. In Rattus norvegicus (Rat), this protein is Natural cytotoxicity triggering receptor 1 (Ncr1).